A 309-amino-acid chain; its full sequence is Mitochondrial glycine transporter (309 aa).

3 Solcar repeats span residues 2–94 (SNVG…LRAL), 124–207 (LTSQ…IKHE), and 219–304 (QATL…GLML). 6 consecutive transmembrane segments (helical) span residues 8–33 (LLSG…TRLQ), 69–95 (GTTP…RALM), 130–155 (LIAG…ARFE), 182–205 (GFLA…EGIK), 223–249 (IHGL…KTKI), and 279–297 (GASL…GWAV).

Belongs to the mitochondrial carrier (TC 2.A.29) family. SLC25A38 subfamily.

The protein resides in the mitochondrion inner membrane. It carries out the reaction glycine(in) = glycine(out). Functionally, mitochondrial glycine transporter that imports glycine into the mitochondrial matrix. Plays an important role in providing glycine for the first enzymatic step in heme biosynthesis, the condensation of glycine with succinyl-CoA to produce 5-aminolevulinate (ALA) in the mitochondrial matrix. This Laccaria bicolor (strain S238N-H82 / ATCC MYA-4686) (Bicoloured deceiver) protein is Mitochondrial glycine transporter.